A 370-amino-acid polypeptide reads, in one-letter code: Cobalt-precorrin-5B C(1)-methyltransferase (370 aa).

The protein belongs to the CbiD family.

It carries out the reaction Co-precorrin-5B + S-adenosyl-L-methionine = Co-precorrin-6A + S-adenosyl-L-homocysteine. It participates in cofactor biosynthesis; adenosylcobalamin biosynthesis; cob(II)yrinate a,c-diamide from sirohydrochlorin (anaerobic route): step 6/10. In terms of biological role, catalyzes the methylation of C-1 in cobalt-precorrin-5B to form cobalt-precorrin-6A. This is Cobalt-precorrin-5B C(1)-methyltransferase from Pseudomonas syringae pv. syringae (strain B728a).